The primary structure comprises 1171 residues: ATP-dependent helicase/deoxyribonuclease subunit B (1171 aa).

In terms of domain architecture, UvrD-like helicase ATP-binding spans 1-343 (MSLRFVIGRA…LVAEENYRYR (343 aa)). 8–15 (GRAGSGKS) serves as a coordination point for ATP. The UvrD-like helicase C-terminal domain occupies 281–587 (MEQPRFHSPA…QFANIPPSLD (307 aa)). Positions 805, 1129, 1132, and 1138 each coordinate [4Fe-4S] cluster.

This sequence belongs to the helicase family. AddB/RexB type 1 subfamily. Heterodimer of AddA and AddB. The cofactor is Mg(2+). Requires [4Fe-4S] cluster as cofactor.

Functionally, the heterodimer acts as both an ATP-dependent DNA helicase and an ATP-dependent, dual-direction single-stranded exonuclease. Recognizes the chi site generating a DNA molecule suitable for the initiation of homologous recombination. The AddB subunit has 5' -&gt; 3' nuclease activity but not helicase activity. The polypeptide is ATP-dependent helicase/deoxyribonuclease subunit B (Bacillus thuringiensis subsp. konkukian (strain 97-27)).